The primary structure comprises 297 residues: uncharacterized protein (297 aa).

Disordered stretches follow at residues 12–43 (QNNN…TNDN), 65–85 (VPNS…DKPI), 122–151 (KVST…TNET), and 265–297 (SRLS…DQNN). Over residues 65–79 (VPNSINVNTSSSGNK) the composition is skewed to polar residues. Low complexity predominate over residues 122 to 135 (KVSTTTTTTSSTSK). The span at 140 to 151 (QTITKPNKTNET) shows a compositional bias: polar residues. Over residues 268–287 (SSNNNNNNNNNNNNNNNNSN) the composition is skewed to low complexity.

This is an uncharacterized protein from Dictyostelium discoideum (Social amoeba).